Reading from the N-terminus, the 300-residue chain is Cytochrome b (300 aa).

The next 6 helical transmembrane spans lie at 28–48, 72–94, 107–127, 168–187, 223–243, and 279–299; these read YGFLLGIVFFIQILKGVLLAL, WCFRYMHATGASFVFILTYLHIL, SWISGLMIFLISIVTAFYGYV, FFVFIYFPFIALCQSLFGIL, IPNKTAGLLVMLASLQILFLL, and IGCQLPQILHFIWSFIYYIIL. The heme b site is built by His78 and His92.

The protein belongs to the cytochrome b family. The main subunits of complex b-c1 are: cytochrome b, cytochrome c1 and the Rieske protein. Heme b serves as cofactor.

The protein resides in the mitochondrion inner membrane. In terms of biological role, component of the ubiquinol-cytochrome c reductase complex (complex III or cytochrome b-c1 complex) that is part of the mitochondrial respiratory chain. The b-c1 complex mediates electron transfer from ubiquinol to cytochrome c. Contributes to the generation of a proton gradient across the mitochondrial membrane that is then used for ATP synthesis. This is Cytochrome b (MT-CYB) from Plasmodium gallinaceum.